We begin with the raw amino-acid sequence, 406 residues long: MSGEQEPDDSYARVRAVVMTRDDSSGGWLQLGGGGLSSVTVSKTLQPGDSGGTEFLVHGERLRDKTVVLECVLRRDLVYNKVTPTFHHWRIGDKKFGLTFQSPADARAFDRGIRRAIEDLSQGLPASCHGESETSEDGPQVNKEDHYSTHNNDHFFRSDSIPTEELYRTSVIRPSPFENLNPRRAYIHNQVPLKPIRHVSFQDEDEIVRINPRDMIIRRYADYRHPDIFRNDVDREEPEDVTFFTKTDSKKPSYLYSPANGRDSLKEQKPVEVCKIQPTSSLKKSKGKKEDGEHSSCVYCQERFNHEENGRGKCQDAPDPIQRCIYQVSCMLCAESMLYHCMSDSEGDYSDPCSCDASDENLCLRWLALITLSFIAPCMCCYLPLRACHHCGEMCGCCGGKHKAAG.

The WH1 domain maps to 3–120 (GEQEPDDSYA…RGIRRAIEDL (118 aa)). Positions 124–154 (LPASCHGESETSEDGPQVNKEDHYSTHNNDH) are disordered. The segment covering 142–154 (NKEDHYSTHNNDH) has biased composition (basic and acidic residues). The KBD domain occupies 195–247 (PIRHVSFQDEDEIVRINPRDMIIRRYADYRHPDIFRNDVDREEPEDVTFFTKT). An SPR domain is found at 296-404 (SCVYCQERFN…CGCCGGKHKA (109 aa)).

In terms of processing, palmitoylated by ZDHHC17/HIP14. Ubiquitinated. Post-translationally, phosphorylated on tyrosine.

The protein resides in the cell membrane. In terms of biological role, tyrosine kinase substrate that inhibits growth-factor-mediated activation of MAP kinase. This is Sprouty-related, EVH1 domain-containing protein 1 (spred1) from Xenopus tropicalis (Western clawed frog).